A 785-amino-acid chain; its full sequence is Endonuclease MutS2 (785 aa).

An ATP-binding site is contributed by 335 to 342; the sequence is GPNTGGKT. The region spanning 710–785 is the Smr domain; sequence LDLRGERYEE…GLGNTVVELR (76 aa). Positions 764–785 are disordered; that stretch reads VKSARDGGANEGGLGNTVVELR.

It belongs to the DNA mismatch repair MutS family. MutS2 subfamily. Homodimer. Binds to stalled ribosomes, contacting rRNA.

In terms of biological role, endonuclease that is involved in the suppression of homologous recombination and thus may have a key role in the control of bacterial genetic diversity. Functionally, acts as a ribosome collision sensor, splitting the ribosome into its 2 subunits. Detects stalled/collided 70S ribosomes which it binds and splits by an ATP-hydrolysis driven conformational change. Acts upstream of the ribosome quality control system (RQC), a ribosome-associated complex that mediates the extraction of incompletely synthesized nascent chains from stalled ribosomes and their subsequent degradation. Probably generates substrates for RQC. The protein is Endonuclease MutS2 of Halalkalibacterium halodurans (strain ATCC BAA-125 / DSM 18197 / FERM 7344 / JCM 9153 / C-125) (Bacillus halodurans).